A 231-amino-acid chain; its full sequence is L-ribulose-5-phosphate 4-epimerase SgbE (231 aa).

Substrate-binding positions include 27 to 28 (GN), 44 to 45 (SG), and 74 to 75 (SS). Residues D76, H95, and H97 each coordinate Zn(2+). The active-site Proton donor/acceptor is the D120. H171 provides a ligand contact to Zn(2+). Residue Y229 is the Proton donor/acceptor of the active site.

Belongs to the aldolase class II family. AraD/FucA subfamily. The cofactor is Zn(2+).

The catalysed reaction is L-ribulose 5-phosphate = D-xylulose 5-phosphate. In terms of biological role, catalyzes the interconversion of L-ribulose 5-phosphate (LRu5P) and D-xylulose 5-phosphate (D-Xu5P) via a retroaldol/aldol mechanism (carbon-carbon bond cleavage analogous to a class II aldolase reaction). May be involved in the utilization of 2,3-diketo-L-gulonate. This Escherichia coli (strain K12) protein is L-ribulose-5-phosphate 4-epimerase SgbE.